The primary structure comprises 231 residues: Urease accessory protein UreE (231 aa).

Positions 185–231 (VASPLDEPHGSGLHIHGIHSHGEGHSHGDHDHDHSHSHGDHDHDHKH) are disordered. Positions 204 to 231 (SHGEGHSHGDHDHDHSHSHGDHDHDHKH) are enriched in basic and acidic residues.

Belongs to the UreE family.

Its subcellular location is the cytoplasm. Functionally, involved in urease metallocenter assembly. Binds nickel. Probably functions as a nickel donor during metallocenter assembly. The sequence is that of Urease accessory protein UreE from Yersinia pseudotuberculosis serotype O:1b (strain IP 31758).